A 61-amino-acid chain; its full sequence is Large ribosomal subunit protein bL28 (61 aa).

Positions 1–26 (MAKDFLNGKRTHFGNKRSHALNSSRR) are disordered. Over residues 9–19 (KRTHFGNKRSH) the composition is skewed to basic residues.

This sequence belongs to the bacterial ribosomal protein bL28 family.

In Levilactobacillus brevis (strain ATCC 367 / BCRC 12310 / CIP 105137 / JCM 1170 / LMG 11437 / NCIMB 947 / NCTC 947) (Lactobacillus brevis), this protein is Large ribosomal subunit protein bL28.